Consider the following 267-residue polypeptide: DNA repair protein RecO (267 aa).

The protein belongs to the RecO family.

Its function is as follows. Involved in DNA repair and RecF pathway recombination. The polypeptide is DNA repair protein RecO (Prochlorococcus marinus (strain MIT 9303)).